Here is a 1438-residue protein sequence, read N- to C-terminus: DNA polymerase III PolC-type (1438 aa).

In terms of domain architecture, Exonuclease spans 422–578 (YVVFDVETTG…YDTEATAYIF (157 aa)).

Belongs to the DNA polymerase type-C family. PolC subfamily.

Its subcellular location is the cytoplasm. It catalyses the reaction DNA(n) + a 2'-deoxyribonucleoside 5'-triphosphate = DNA(n+1) + diphosphate. Functionally, required for replicative DNA synthesis. This DNA polymerase also exhibits 3' to 5' exonuclease activity. In Staphylococcus aureus (strain MSSA476), this protein is DNA polymerase III PolC-type.